Reading from the N-terminus, the 101-residue chain is Small ribosomal subunit protein uS14 (101 aa).

It belongs to the universal ribosomal protein uS14 family. In terms of assembly, part of the 30S ribosomal subunit. Contacts proteins S3 and S10.

Its function is as follows. Binds 16S rRNA, required for the assembly of 30S particles and may also be responsible for determining the conformation of the 16S rRNA at the A site. The polypeptide is Small ribosomal subunit protein uS14 (Haemophilus influenzae (strain PittGG)).